The chain runs to 279 residues: Single-strand selective monofunctional uracil DNA glycosylase (279 aa).

The substrate site is built by Met86, Phe100, and Asn165. Residues Ser175 to Arg189 are DNA-binding. His241 provides a ligand contact to substrate.

It belongs to the uracil-DNA glycosylase (UDG) superfamily. SMUG1 family.

The protein localises to the nucleus. Functionally, recognizes base lesions in the genome and initiates base excision DNA repair. Acts as a monofunctional DNA glycosylase specific for uracil (U) residues in DNA with a preference for single-stranded DNA substrates. The activity is greater toward mismatches (U/G) compared to matches (U/A). Excises uracil (U), 5-formyluracil (fU) and uracil derivatives bearing an oxidized group at C5 [5-hydroxyuracil (hoU) and 5-hydroxymethyluracil (hmU)] in ssDNA and dsDNA, but not analogous cytosine derivatives (5-hydroxycytosine and 5-formylcytosine), nor other oxidized bases. The activity is damage-specific and salt-dependent. The substrate preference is the following: ssDNA &gt; dsDNA (G pair) = dsDNA (A pair) at low salt concentration, and dsDNA (G pair) &gt; dsDNA (A pair) &gt; ssDNA at high salt concentration. The sequence is that of Single-strand selective monofunctional uracil DNA glycosylase (Smug1) from Mus musculus (Mouse).